The primary structure comprises 214 residues: Adenylate kinase (214 aa).

ATP is bound at residue G10–T15. The tract at residues S30 to V59 is NMP. Residues T31, R36, Q57 to V59, G85 to R88, and Q92 contribute to the AMP site. An LID region spans residues G122–D159. ATP contacts are provided by residues R123 and V132–Y133. R156 and R167 together coordinate AMP. Position 200 (Q200) interacts with ATP.

Belongs to the adenylate kinase family. Monomer.

The protein localises to the cytoplasm. The catalysed reaction is AMP + ATP = 2 ADP. Its pathway is purine metabolism; AMP biosynthesis via salvage pathway; AMP from ADP: step 1/1. Functionally, catalyzes the reversible transfer of the terminal phosphate group between ATP and AMP. Plays an important role in cellular energy homeostasis and in adenine nucleotide metabolism. This is Adenylate kinase from Shewanella amazonensis (strain ATCC BAA-1098 / SB2B).